We begin with the raw amino-acid sequence, 40 residues long: Beta-defensin 2 (40 aa).

Disulfide bonds link C7–C36, C14–C29, and C19–C37.

This sequence belongs to the beta-defensin family. As to expression, neutrophilic granules.

Its subcellular location is the secreted. Its function is as follows. Has bactericidal activity. Active against E.coli ML35 and S.aureus 502A. This Bos taurus (Bovine) protein is Beta-defensin 2 (DEFB2).